The chain runs to 258 residues: Imidazole glycerol phosphate synthase subunit HisF (258 aa).

Active-site residues include aspartate 11 and aspartate 130.

Belongs to the HisA/HisF family. As to quaternary structure, heterodimer of HisH and HisF.

The protein localises to the cytoplasm. The catalysed reaction is 5-[(5-phospho-1-deoxy-D-ribulos-1-ylimino)methylamino]-1-(5-phospho-beta-D-ribosyl)imidazole-4-carboxamide + L-glutamine = D-erythro-1-(imidazol-4-yl)glycerol 3-phosphate + 5-amino-1-(5-phospho-beta-D-ribosyl)imidazole-4-carboxamide + L-glutamate + H(+). It participates in amino-acid biosynthesis; L-histidine biosynthesis; L-histidine from 5-phospho-alpha-D-ribose 1-diphosphate: step 5/9. IGPS catalyzes the conversion of PRFAR and glutamine to IGP, AICAR and glutamate. The HisF subunit catalyzes the cyclization activity that produces IGP and AICAR from PRFAR using the ammonia provided by the HisH subunit. The chain is Imidazole glycerol phosphate synthase subunit HisF from Stenotrophomonas maltophilia (strain R551-3).